Consider the following 286-residue polypeptide: 4-hydroxybenzoate octaprenyltransferase (286 aa).

Transmembrane regions (helical) follow at residues 20 to 40, 43 to 63, 95 to 115, 116 to 136, 142 to 162, 167 to 187, 210 to 230, and 235 to 255; these read IGTF…AGGM, LKVL…GCII, ILFV…NPLV, VQLS…KRFT, FLGV…LGTV, WWLF…YAMV, QIIG…GLSA, and VFAL…KLIF.

It belongs to the UbiA prenyltransferase family. It depends on Mg(2+) as a cofactor.

The protein resides in the cell inner membrane. The enzyme catalyses all-trans-octaprenyl diphosphate + 4-hydroxybenzoate = 4-hydroxy-3-(all-trans-octaprenyl)benzoate + diphosphate. Its pathway is cofactor biosynthesis; ubiquinone biosynthesis. Catalyzes the prenylation of para-hydroxybenzoate (PHB) with an all-trans polyprenyl group. Mediates the second step in the final reaction sequence of ubiquinone-8 (UQ-8) biosynthesis, which is the condensation of the polyisoprenoid side chain with PHB, generating the first membrane-bound Q intermediate 3-octaprenyl-4-hydroxybenzoate. The protein is 4-hydroxybenzoate octaprenyltransferase of Shewanella loihica (strain ATCC BAA-1088 / PV-4).